An 841-amino-acid polypeptide reads, in one-letter code: Probable alpha-glucuronidase A (841 aa).

An N-terminal signal peptide occupies residues 1–20; it reads MRGLNLFQLILALLLSMVAA. 15 N-linked (GlcNAc...) asparagine glycosylation sites follow: Asn51, Asn76, Asn85, Asn149, Asn222, Asn279, Asn310, Asn343, Asn450, Asn465, Asn527, Asn576, Asn682, Asn723, and Asn732.

Belongs to the glycosyl hydrolase 67 family.

Its subcellular location is the secreted. It carries out the reaction an alpha-D-glucuronoside + H2O = D-glucuronate + an alcohol. Functionally, alpha-glucuronidase involved in the hydrolysis of xylan, a major structural heterogeneous polysaccharide found in plant biomass representing the second most abundant polysaccharide in the biosphere, after cellulose. Releases 4-O-methylglucuronic acid from xylan. The chain is Probable alpha-glucuronidase A (aguA) from Aspergillus niger (strain ATCC MYA-4892 / CBS 513.88 / FGSC A1513).